The following is a 91-amino-acid chain: uncharacterized protein (91 aa).

The first 21 residues, 1–21, serve as a signal peptide directing secretion; sequence MKIISKMLVGALALAVTNVYA.

The protein belongs to the BhsA/McbA family.

Its subcellular location is the periplasm. This is an uncharacterized protein from Escherichia coli (strain K12).